Reading from the N-terminus, the 957-residue chain is Retinoblastoma-related protein 1 (957 aa).

The domain A stretch occupies residues 369-569; that stretch reads TPVSTAMTTA…EKGSSMYNSL (201 aa). A pocket region spans residues 369–808; that stretch reads TPVSTAMTTA…NEVFIPTVKP (440 aa). The interval 570-677 is spacer; it reads IVARPTLSAE…PAAGGETCAE (108 aa). The domain B stretch occupies residues 678-808; it reads TGIGVFLSKI…NEVFIPTVKP (131 aa). Residues 814–854 are disordered; sequence GPGTSPNRNNEPKSGGDAASFPESPRLSRFPNLPDMSPKKV.

This sequence belongs to the retinoblastoma protein (RB) family.

Its subcellular location is the nucleus. Regulator of biological processes that recruits a histone deacetylase to control gene transcription. May play a role in the entry into mitosis, negatively regulating the cell proliferation. Formation of stable complexes with geminiviridae replication-associated proteins may create a cellular environment which favors viral DNA replication. This Triticum aestivum (Wheat) protein is Retinoblastoma-related protein 1 (RBR1).